We begin with the raw amino-acid sequence, 1501 residues long: Opaque-specific ABC transporter CDR3 (1501 aa).

Residues 1-502 lie on the Cytoplasmic side of the membrane; that stretch reads MAKTSQAEGQ…KRYWDRMRGD (502 aa). The tract at residues 58 to 87 is disordered; sequence TYTTATMHPNGINPISDKTDPTLDPESPSF. The ABC transporter 1 domain maps to 140–395; it reads KYARNIFNKF…FKKMGFVCQD (256 aa). A helical transmembrane segment spans residues 503–523; sequence IIVPLSTVAGNIAMALILSSV. N-linked (GlcNAc...) asparagine glycosylation occurs at Asn-530. 5 helical membrane passes run 540-560, 589-609, 614-634, 653-673, and 755-775; these read VMYY…YNMY, FPLK…MVNF, GAFF…SHLF, LLLF…YMLG, and FGVL…FVQT. Over 776 to 1175 the chain is Cytoplasmic; sequence NKSSISKGET…LFQQYWRTPS (400 aa). The ABC transporter 2 domain maps to 840 to 1083; it reads FHWRNLTYTV…LIEYFERNGA (244 aa). Position 876–883 (876–883) interacts with ATP; it reads GASGAGKT. Helical transmembrane passes span 1176–1196, 1212–1232, 1261–1281, 1297–1317, 1325–1345, 1353–1375, and 1451–1471; these read YIYS…FTYY, IFSM…LFVT, IPYQ…PVGL, LMWL…QFCI, YAAN…GVIA, FWVF…SIGL, and GIFI…YWLF.

It belongs to the ABC transporter superfamily. ABCG family. PDR (TC 3.A.1.205) subfamily.

It is found in the membrane. This is Opaque-specific ABC transporter CDR3 (CDR3) from Candida albicans (Yeast).